The chain runs to 235 residues: Aspartate/glutamate leucyltransferase (235 aa).

The protein belongs to the R-transferase family. Bpt subfamily.

It is found in the cytoplasm. The enzyme catalyses N-terminal L-glutamyl-[protein] + L-leucyl-tRNA(Leu) = N-terminal L-leucyl-L-glutamyl-[protein] + tRNA(Leu) + H(+). The catalysed reaction is N-terminal L-aspartyl-[protein] + L-leucyl-tRNA(Leu) = N-terminal L-leucyl-L-aspartyl-[protein] + tRNA(Leu) + H(+). Functionally, functions in the N-end rule pathway of protein degradation where it conjugates Leu from its aminoacyl-tRNA to the N-termini of proteins containing an N-terminal aspartate or glutamate. In Pseudomonas putida (strain GB-1), this protein is Aspartate/glutamate leucyltransferase.